The chain runs to 76 residues: Protein UvsW.1 (76 aa).

In terms of assembly, probably interacts with UvsW.

In terms of biological role, inhibits the single-stranded annealing activity of UvsW, has no effect on UvsW helicase activity. The sequence is that of Protein UvsW.1 from Escherichia coli (Bacteriophage T4).